A 76-amino-acid polypeptide reads, in one-letter code: Acyl carrier protein (76 aa).

The region spanning 1 to 76 is the Carrier domain; it reads MSIEERVKKI…SAIDYVQNNQ (76 aa). At S36 the chain carries O-(pantetheine 4'-phosphoryl)serine.

Belongs to the acyl carrier protein (ACP) family. 4'-phosphopantetheine is transferred from CoA to a specific serine of apo-ACP by AcpS. This modification is essential for activity because fatty acids are bound in thioester linkage to the sulfhydryl of the prosthetic group.

It is found in the cytoplasm. It participates in lipid metabolism; fatty acid biosynthesis. In terms of biological role, carrier of the growing fatty acid chain in fatty acid biosynthesis. This is Acyl carrier protein from Haemophilus influenzae (strain 86-028NP).